The primary structure comprises 521 residues: Phosphoenolpyruvate carboxykinase (ATP) (521 aa).

Residues R52, Y186, and K192 each coordinate substrate. ATP-binding positions include K192, H211, and 227-235 (GLSGTGKTT). The Mn(2+) site is built by K192 and H211. D248 contributes to the Mn(2+) binding site. ATP-binding positions include E276, R313, 432 to 433 (RI), and T438. R313 serves as a coordination point for substrate.

This sequence belongs to the phosphoenolpyruvate carboxykinase (ATP) family. Mn(2+) is required as a cofactor.

The protein resides in the cytoplasm. It carries out the reaction oxaloacetate + ATP = phosphoenolpyruvate + ADP + CO2. The protein operates within carbohydrate biosynthesis; gluconeogenesis. Involved in the gluconeogenesis. Catalyzes the conversion of oxaloacetate (OAA) to phosphoenolpyruvate (PEP) through direct phosphoryl transfer between the nucleoside triphosphate and OAA. This is Phosphoenolpyruvate carboxykinase (ATP) from Caldanaerobacter subterraneus subsp. tengcongensis (strain DSM 15242 / JCM 11007 / NBRC 100824 / MB4) (Thermoanaerobacter tengcongensis).